The sequence spans 784 residues: Lon protease (784 aa).

The 202-residue stretch at 6 to 207 (LPLMALRDMV…TVITTLTSNI (202 aa)) folds into the Lon N-terminal domain. 356-363 (GPPGVGKT) lines the ATP pocket. The Lon proteolytic domain occupies 592–773 (EDQIGSTTGL…DQVLKHALVE (182 aa)). Catalysis depends on residues Ser-679 and Lys-722.

The protein belongs to the peptidase S16 family. In terms of assembly, homohexamer. Organized in a ring with a central cavity.

Its subcellular location is the cytoplasm. It catalyses the reaction Hydrolysis of proteins in presence of ATP.. Its function is as follows. ATP-dependent serine protease that mediates the selective degradation of mutant and abnormal proteins as well as certain short-lived regulatory proteins. Required for cellular homeostasis and for survival from DNA damage and developmental changes induced by stress. Degrades polypeptides processively to yield small peptide fragments that are 5 to 10 amino acids long. Binds to DNA in a double-stranded, site-specific manner. The chain is Lon protease from Rickettsia typhi (strain ATCC VR-144 / Wilmington).